Consider the following 2167-residue polypeptide: SH3 and multiple ankyrin repeat domains protein 1 (2167 aa).

Residues 1–63 are disordered; it reads MTHSPATSED…TRGLQGRSMS (63 aa). Over residues 17 to 32 the composition is skewed to low complexity; the sequence is SECPEGGSESDSSPDG. Over residues 33–47 the composition is skewed to gly residues; that stretch reads PGRGPQGTRGRGSGA. Omega-N-methylarginine is present on Arg43. Position 186 is a phosphotyrosine (Tyr186). ANK repeat units lie at residues 195–210, 212–245, 246–278, 279–312, 313–345, 346–378, and 379–395; these read VARL…YHDS, SGET…FRAR, DGMT…YKDR, RGLT…IADE, NGWQ…AQNA, SGNT…VKNN, and NGQT…NFEL. Disordered stretches follow at residues 413–432 and 453–546; these read SPKY…TVPP and APGA…SRGR. Positions 453 to 479 are enriched in low complexity; sequence APGASSSGTPGPTSGPQGQSQPSAPST. Gly residues predominate over residues 527 to 542; that stretch reads PAGGTGGSGGPGGSLG. Ser540 bears the Phosphoserine mark. Arg544 carries the post-translational modification Omega-N-methylarginine. The SH3 domain maps to 554–613; it reads VPGRSFMAVKSYQAQGEGEISLSKGEKIKVLSIGEGGFWEGQVKGRVGWFPSDCLEEVAN. Phosphoserine occurs at positions 638, 641, 671, and 791. One can recognise a PDZ domain in the interval 663–757; sequence TVLLQKKDSE…TLMVKVVMVT (95 aa). Residues 841 to 894 form a disordered region; sequence ISASESPGPGGLASLGKHRPKGFFATESSFDPHHRSQPSYDRPSFLPPGPGLML. Ser898 carries the phosphoserine modification. 8 disordered regions span residues 917 to 1233, 1245 to 1294, 1308 to 1417, 1429 to 1725, 1740 to 1787, 1842 to 1866, 1898 to 1988, and 2002 to 2029; these read SRSL…LDFT, RREG…SIDE, GGSS…VLRL, RAGL…AGVA, GQAF…DPVT, KLLP…QPQA, PWAR…STRH, and RRAP…LPIL. Residues 928 to 947 show a composition bias toward pro residues; it reads IPPPPTTSPPEPPYSTPPAP. Arg958 bears the Omega-N-methylarginine mark. Residues 964-980 are compositionally biased toward low complexity; that stretch reads PSSGGPLPASSPSSFDG. Positions 1004–1028 are enriched in basic residues; it reads AHHHPPHHHHHHAPPPQPHHHHAHP. Arg1059 is subject to Omega-N-methylarginine. A compositionally biased stretch (low complexity) spans 1064 to 1085; sequence SPTSGAPSPSHHSSSGGSSGPT. 2 positions are modified to omega-N-methylarginine: Arg1098 and Arg1109. 2 stretches are compositionally biased toward low complexity: residues 1132–1146 and 1171–1184; these read SIPS…ALPR and STSS…GSST. Over residues 1203-1224 the composition is skewed to pro residues; sequence SPAPATSPVPPSPSPVPTPASP. A compositionally biased stretch (basic and acidic residues) spans 1245-1256; the sequence is RREGGWQNEARR. Residue Arg1257 is modified to Asymmetric dimethylarginine. Ser1291 is modified (phosphoserine). Positions 1363 to 1372 are enriched in basic and acidic residues; sequence ARERALKESS. Residues 1378–1395 are compositionally biased toward pro residues; it reads PQPPPRPPSPRYDAPPPT. Residues 1396-1408 are compositionally biased toward basic residues; that stretch reads LHHHSPHSPHSPH. Arg1429 carries the omega-N-methylarginine modification. Residue Ser1442 is modified to Phosphoserine. Composition is skewed to low complexity over residues 1459–1469 and 1530–1541; these read PGVGPLLLQLG and RRVLPTSPTSPR. Pro residues predominate over residues 1589-1615; it reads PLTPGPPHPLPDPPSPATPLPAAPPPA. Positions 1624–1641 are enriched in polar residues; it reads DSTASSLTSYDSEVATLT. Pro residues predominate over residues 1648–1676; it reads PGDPPAPGPPAPAAPAPPAPQPGPDPPPG. Positions 1684-1694 are enriched in basic and acidic residues; the sequence is VDSRSSSDHPL. Over residues 1695-1708 the composition is skewed to low complexity; sequence ETISSASTLSSLSA. Over residues 1709–1724 the composition is skewed to gly residues; that stretch reads EGGGNTGGVAGGGAGV. Residues 1850–1861 are compositionally biased toward pro residues; the sequence is PGPPPPPLPGPL. Arg1901 is modified (omega-N-methylarginine). Low complexity-rich tracts occupy residues 1934-1945, 1960-1985, and 2002-2012; these read SQTSLLSKPSSS, TGSG…ASAS, and RRAPSPSLLPA. Omega-N-methylarginine occurs at positions 2022, 2042, and 2080. The SAM domain occupies 2104-2167; that stretch reads WTKFDVADWL…DRALKFFLER (64 aa).

The protein belongs to the SHANK family. As to quaternary structure, may homomultimerize via its SAM domain. Interacts with the C-terminus of SSTR2 via the PDZ domain. Interacts with SHARPIN, SPTAN1 and DLGAP1/GKAP. Part of a complex with DLG4/PSD-95 and DLGAP1/GKAP. Interacts with BAIAP2. Interacts with IGSF9. Interacts with HOMER1 and HOMER3. In terms of tissue distribution, expressed only in brain (neuropil of cortex, CA1 region hippocampus and molecular layer of cerebellum).

It localises to the cytoplasm. Its subcellular location is the synapse. The protein localises to the postsynaptic density. Seems to be an adapter protein in the postsynaptic density (PSD) of excitatory synapses that interconnects receptors of the postsynaptic membrane including NMDA-type and metabotropic glutamate receptors, and the actin-based cytoskeleton. Plays a role in the structural and functional organization of the dendritic spine and synaptic junction. Overexpression promotes maturation of dendritic spines and the enlargement of spine heads via its ability to recruit Homer to postsynaptic sites, and enhances presynaptic function. This Rattus norvegicus (Rat) protein is SH3 and multiple ankyrin repeat domains protein 1 (Shank1).